The chain runs to 140 residues: Midkine (140 aa).

An N-terminal signal peptide occupies residues 1-20 (MQHRSFFLLALVALLAVTTA). 5 disulfide bridges follow: C34–C58, C42–C67, C49–C71, C81–C113, and C91–C123.

This sequence belongs to the pleiotrophin family. In terms of assembly, homodimer. Interacts with ALK. Interacts with LRP1; promotes neuronal survival. Interacts with LRP2. Interacts with NCAM1. Interacts (via C-terminal) with PTPRZ1 (via chondroitin sulfate chains); this interaction is inhibited by PTN; this interaction promotes neuronal migration. Interacts with NCL; this interaction promotes NCL clustering and lateral movements of this complex into lipid rafts leading to MDK internalization. Interacts with LRP6 and LRP8: this interaction is calcium dependent. Interacts with ITGA4. Interacts with ITGA6. Interacts with ITGB1. Interacts with ITGA4:ITGB1 complex; this interaction mediates MDK-induced osteoblast cells migration through PXN phosphorylation. Interacts with ITGA6:ITGB1 complex; this interaction mediates MDK-induced neurite outgrowth. Interacts with NOTCH2; this interactio mediates a nuclear accumulation of NOTCH2 and therefore activation of NOTCH2 signaling leading to interaction between HES1 and STAT3. Interacts with GPC2 (via heparan sulfate chain); this interaction is inhibited by heparin followed by chondroitin sulfate E; this interaction induces GPC2 clustering through heparan sulfate chain; this interaction induces neuronal cell adhesion and neurite outgrowth. Interacts with SDC3; this interaction induces SDC3 clustering; this interaction induces neuronal cell adhesion and neurite outgrowth. Interacts with SDC1. Interacts with CSPG5; this interaction promotes elongation of oligodendroglial precursor-like cells. As to expression, expressed at a low level in arteries, and at higher levels in newly formed neointima. In brain, expressed in the caudate nucleus and the brain stem.

The protein localises to the secreted. Functionally, developmentally regulated, secreted growth factor homologous to pleiotrophin (PTN), which has heparin binding activity. Binds anaplastic lymphoma kinase (ALK) which induces ALK activation and subsequent phosphorylation of the insulin receptor substrate (IRS1), followed by the activation of mitogen-activated protein kinase (MAPK) and PI3-kinase, and the induction of cell proliferation. Involved in neointima formation after arterial injury, possibly by mediating leukocyte recruitment. Also involved in early fetal adrenal gland development. Secreted protein that functions as a cytokine and growth factor and mediates its signal through cell-surface proteoglycan and non-proteoglycan receptors. Binds cell-surface proteoglycan receptors via their chondroitin sulfate (CS) groups. Thereby regulates many processes like inflammatory response, cell proliferation, cell adhesion, cell growth, cell survival, tissue regeneration, cell differentiation and cell migration. Participates in inflammatory processes by exerting two different activities. Firstly, mediates neutrophils and macrophages recruitment to the sites of inflammation both by direct action by cooperating namely with ITGB2 via LRP1 and by inducing chemokine expression. This inflammation can be accompanied by epithelial cell survival and smooth muscle cell migration after renal and vessel damage, respectively. Secondly, suppresses the development of tolerogenic dendric cells thereby inhibiting the differentiation of regulatory T cells and also promote T cell expansion through NFAT signaling and Th1 cell differentiation. Promotes tissue regeneration after injury or trauma. After heart damage negatively regulates the recruitment of inflammatory cells and mediates cell survival through activation of anti-apoptotic signaling pathways via MAPKs and AKT pathways through the activation of angiogenesis. Also facilitates liver regeneration as well as bone repair by recruiting macrophage at trauma site and by promoting cartilage development by facilitating chondrocyte differentiation. Plays a role in brain by promoting neural precursor cells survival and growth through interaction with heparan sulfate proteoglycans. Binds PTPRZ1 and promotes neuronal migration and embryonic neurons survival. Binds SDC3 or GPC2 and mediates neurite outgrowth and cell adhesion. Binds chondroitin sulfate E and heparin leading to inhibition of neuronal cell adhesion induced by binding with GPC2. Binds CSPG5 and promotes elongation of oligodendroglial precursor-like cells. Also binds ITGA6:ITGB1 complex; this interaction mediates MDK-induced neurite outgrowth. Binds LRP1; promotes neuronal survival. Binds ITGA4:ITGB1 complex; this interaction mediates MDK-induced osteoblast cells migration through PXN phosphorylation. Binds anaplastic lymphoma kinase (ALK) which induces ALK activation and subsequent phosphorylation of the insulin receptor substrate (IRS1), followed by the activation of mitogen-activated protein kinase (MAPK) and PI3-kinase, and the induction of cell proliferation. Promotes epithelial to mesenchymal transition through interaction with NOTCH2. During arteriogenesis, plays a role in vascular endothelial cell proliferation by inducing VEGFA expression and release which in turn induces nitric oxide synthase expression. Moreover activates vasodilation through nitric oxide synthase activation. Negatively regulates bone formation in response to mechanical load by inhibiting Wnt/beta-catenin signaling in osteoblasts. In addition plays a role in hippocampal development, working memory, auditory response, early fetal adrenal gland development and the female reproductive system. The polypeptide is Midkine (Rattus norvegicus (Rat)).